Here is a 281-residue protein sequence, read N- to C-terminus: Acetyl-coenzyme A carboxylase carboxyl transferase subunit beta 2 (281 aa).

The region spanning 26 to 281 is the CoA carboxyltransferase N-terminal domain; that stretch reads LLTRCPVCHE…TITQGGHQDV (256 aa). Positions 30, 33, 48, and 51 each coordinate Zn(2+). The C4-type zinc finger occupies 30–51; that stretch reads CPVCHEDCYTQDLGEFKVCPHC.

This sequence belongs to the AccD/PCCB family. Acetyl-CoA carboxylase is a heterohexamer composed of biotin carboxyl carrier protein (AccB), biotin carboxylase (AccC) and two subunits each of ACCase subunit alpha (AccA) and ACCase subunit beta (AccD). The cofactor is Zn(2+).

The protein localises to the cytoplasm. The enzyme catalyses N(6)-carboxybiotinyl-L-lysyl-[protein] + acetyl-CoA = N(6)-biotinyl-L-lysyl-[protein] + malonyl-CoA. The protein operates within lipid metabolism; malonyl-CoA biosynthesis; malonyl-CoA from acetyl-CoA: step 1/1. In terms of biological role, component of the acetyl coenzyme A carboxylase (ACC) complex. Biotin carboxylase (BC) catalyzes the carboxylation of biotin on its carrier protein (BCCP) and then the CO(2) group is transferred by the transcarboxylase to acetyl-CoA to form malonyl-CoA. The polypeptide is Acetyl-coenzyme A carboxylase carboxyl transferase subunit beta 2 (Lactiplantibacillus plantarum (strain JDM1) (Lactobacillus plantarum)).